The chain runs to 231 residues: MSNTPIELKGSSFTLSVVHLHEAEPKVIHQALEDKIAQAPAFLKHAPVVLNVSALEDPVNWSAMHKAVSATGLRVIGVSGCKDAQLKAEIEKMGLPILTEGKEKAPRPAPTPQAPAQNTTPVTKTRLIDTPVRSGQRIYAPQCDLIVTSHVSAGAELIADGNIHVYGMMRGRALAGASGDRETQIFCTNLMAELVSIAGEYWLSDQIPAEFYGKAARLQLVENALTVQPLN.

Residues 101–125 (GKEKAPRPAPTPQAPAQNTTPVTKT) are disordered. The span at 114-123 (APAQNTTPVT) shows a compositional bias: low complexity.

The protein belongs to the MinC family. In terms of assembly, interacts with MinD and FtsZ.

Functionally, cell division inhibitor that blocks the formation of polar Z ring septums. Rapidly oscillates between the poles of the cell to destabilize FtsZ filaments that have formed before they mature into polar Z rings. Prevents FtsZ polymerization. The sequence is that of Probable septum site-determining protein MinC from Escherichia coli (strain ATCC 8739 / DSM 1576 / NBRC 3972 / NCIMB 8545 / WDCM 00012 / Crooks).